A 138-amino-acid chain; its full sequence is Large ribosomal subunit protein uL16 (138 aa).

Belongs to the universal ribosomal protein uL16 family. In terms of assembly, part of the 50S ribosomal subunit.

Binds 23S rRNA and is also seen to make contacts with the A and possibly P site tRNAs. The sequence is that of Large ribosomal subunit protein uL16 from Anaeromyxobacter dehalogenans (strain 2CP-1 / ATCC BAA-258).